A 227-amino-acid polypeptide reads, in one-letter code: Orotidine 5'-phosphate decarboxylase (227 aa).

Substrate is bound by residues Asp-8, Lys-30, 59 to 68 (DLKLYDIPYT), Thr-118, Arg-178, Gln-187, Gly-207, and Arg-208. Lys-61 acts as the Proton donor in catalysis.

The protein belongs to the OMP decarboxylase family. Type 1 subfamily. As to quaternary structure, homodimer.

It catalyses the reaction orotidine 5'-phosphate + H(+) = UMP + CO2. The protein operates within pyrimidine metabolism; UMP biosynthesis via de novo pathway; UMP from orotate: step 2/2. Functionally, catalyzes the decarboxylation of orotidine 5'-monophosphate (OMP) to uridine 5'-monophosphate (UMP). This Helicobacter pylori (strain J99 / ATCC 700824) (Campylobacter pylori J99) protein is Orotidine 5'-phosphate decarboxylase.